A 320-amino-acid polypeptide reads, in one-letter code: Mycothiol acetyltransferase (320 aa).

N-acetyltransferase domains follow at residues 16–141 (RQVR…RSLR) and 152–320 (LQIR…AALA). Residue glutamate 36 participates in 1D-myo-inositol 2-(L-cysteinylamino)-2-deoxy-alpha-D-glucopyranoside binding. Residues 80–82 (LVV) and 88–93 (RRGIAT) each bind acetyl-CoA. 1D-myo-inositol 2-(L-cysteinylamino)-2-deoxy-alpha-D-glucopyranoside is bound by residues glutamate 179, lysine 229, and glutamate 239. Acetyl-CoA is bound by residues 243 to 245 (LGV) and 250 to 256 (QGRGLGR). 1D-myo-inositol 2-(L-cysteinylamino)-2-deoxy-alpha-D-glucopyranoside is bound at residue tyrosine 284. 289–294 (NIAAVR) lines the acetyl-CoA pocket.

This sequence belongs to the acetyltransferase family. MshD subfamily. Monomer.

It catalyses the reaction 1D-myo-inositol 2-(L-cysteinylamino)-2-deoxy-alpha-D-glucopyranoside + acetyl-CoA = mycothiol + CoA + H(+). Catalyzes the transfer of acetyl from acetyl-CoA to desacetylmycothiol (Cys-GlcN-Ins) to form mycothiol. This Mycobacterium marinum (strain ATCC BAA-535 / M) protein is Mycothiol acetyltransferase.